A 443-amino-acid polypeptide reads, in one-letter code: FAD-dependent monooxygenase orf3 (443 aa).

The helical transmembrane segment at 5 to 25 (SIEVAIIGAGITGITLALGLL) threads the bilayer. 2 residues coordinate FAD: glutamate 35 and glycine 48. N-linked (GlcNAc...) asparagine glycosylation is found at asparagine 75 and asparagine 87. Arginine 116 is a binding site for FAD. The active site involves arginine 199. The FAD site is built by aspartate 315 and alanine 328.

This sequence belongs to the paxM FAD-dependent monooxygenase family. It depends on FAD as a cofactor.

Its subcellular location is the membrane. It participates in secondary metabolite biosynthesis. In terms of biological role, FAD-dependent monooxygenase; part of the gene cluster that mediates the biosynthesis of nigerpyrone and its derivatives carbonarone A and pestalamide A. The biosynthesis pathway begins with the polyketide assembly by epaA to form phenylacetyl triketide precursor from successive condensation of two malonyl-CoA, presumably with one phenylacetyl-CoA starter unit produced by the phenylacetyl-CoA ligase epaB. For the nigerpyrone biosynthesis, the reactive polyketide chain is released as an aldehyde through the R-domain. A nonenzymatic cyclization and dehydration may create nigerpyrone. For the biosynthesis of carbonarone A and pestalamide A, an extra methyl group is added through the C-methyltransferase domain. Several further steps involving the dehydrogenase orf1, the cytochrome P450 monooxygenase orf2 and the FAD-dependent monooxygenase orf3 are required to form a carbonarone A precursor which is converted to carbonarone A via cyclization. The O-acetyltransferase epaC could catalyze the transfer of 2-methylsuccinyl-CoA, a common intermediate in the ethylmalonyl-CoA pathway, to generate the final product pestalamide A. The protein is FAD-dependent monooxygenase orf3 of Aspergillus niger (strain ATCC MYA-4892 / CBS 513.88 / FGSC A1513).